A 106-amino-acid chain; its full sequence is Large ribosomal subunit protein uL24 (106 aa).

It belongs to the universal ribosomal protein uL24 family. Part of the 50S ribosomal subunit.

One of two assembly initiator proteins, it binds directly to the 5'-end of the 23S rRNA, where it nucleates assembly of the 50S subunit. In terms of biological role, one of the proteins that surrounds the polypeptide exit tunnel on the outside of the subunit. The sequence is that of Large ribosomal subunit protein uL24 from Erythrobacter litoralis (strain HTCC2594).